The sequence spans 345 residues: 3-hydroxy-5-methyl-1-naphthoate 3-O-methyltransferase (345 aa).

D205 is a binding site for S-adenosyl-L-methionine. H252 acts as the Proton acceptor in catalysis.

This sequence belongs to the class I-like SAM-binding methyltransferase superfamily. Cation-independent O-methyltransferase family.

It catalyses the reaction 3-hydroxy-5-methyl-1-naphthoate + S-adenosyl-L-methionine = 3-methoxy-5-methyl-1-naphthoate + S-adenosyl-L-homocysteine + H(+). It participates in antibiotic biosynthesis. Inhibited by different divalent cations, such as Mg(2+), Mn(2+), Fe(2+), Cu(2+) and Zn(2+). Functionally, O-methyltransferase that mediates the formation of 3-methoxy-5-methyl-1-naphthoate from 3-hydroxy-5-methyl-1-naphthoate in the biosynthesis of the antitumor antibiotic azinomycin B. This Streptomyces sahachiroi protein is 3-hydroxy-5-methyl-1-naphthoate 3-O-methyltransferase.